Reading from the N-terminus, the 121-residue chain is Alpha-lactalbumin (121 aa).

The region spanning 1-121 (IDYRKCQASQ…CLEDLDQWRC (121 aa)) is the C-type lysozyme domain. 4 disulfides stabilise this stretch: Cys6-Cys121, Cys28-Cys112, Cys61-Cys77, and Cys73-Cys91. N-linked (GlcNAc...) asparagine glycosylation occurs at Asn44. 5 residues coordinate Ca(2+): Lys79, Asp82, Asp84, Asp87, and Asp88.

It belongs to the glycosyl hydrolase 22 family. Lactose synthase (LS) is a heterodimer of a catalytic component, beta1,4-galactosyltransferase (beta4Gal-T1) and a regulatory component, alpha-lactalbumin (LA). As to expression, mammary gland specific. Secreted in milk.

It is found in the secreted. Regulatory subunit of lactose synthase, changes the substrate specificity of galactosyltransferase in the mammary gland making glucose a good acceptor substrate for this enzyme. This enables LS to synthesize lactose, the major carbohydrate component of milk. In other tissues, galactosyltransferase transfers galactose onto the N-acetylglucosamine of the oligosaccharide chains in glycoproteins. This chain is Alpha-lactalbumin (LALBA), found in Notamacropus rufogriseus (Red-necked wallaby).